Here is a 431-residue protein sequence, read N- to C-terminus: MADLLWQKPGVAVDAKIQTFLAGDDVILDREFFLHDIAASAAHAQGLQHIGILSADELAGLLRELDVLAQDFRAGRFVLDTQYEDGHSAIEARLTERLGDAGRKIHTGRSRNDQILVATRLWLKEKLQRVAQLSAEVAKVALDRAQAEKDLPIPGYTHIQRAVVSSAGMWWAGWAEAFIDNAIRARDTHALVDANPLGTAAGYGVNLPLDREHTTAALGFARMQISPIYAQLSRGKFELAALEALGAATLDLRRIAWDLSLFTSAEFGFVALPAQYTTGSSIMPNKRNPDVIELMRATHASVAAARTEIEQLLSLPSGYHRDLQSSKGAIFHGFGRGLAALELLPSLLANLEWRDDKLRAAIDSGMYATDVAVEAAVAGVPFREAYKAAAAGADSAGQGRTPEGSLAARVSPGSAADLRLDELRARWQALS.

It belongs to the lyase 1 family. Argininosuccinate lyase subfamily.

The protein resides in the cytoplasm. The enzyme catalyses 2-(N(omega)-L-arginino)succinate = fumarate + L-arginine. It functions in the pathway amino-acid biosynthesis; L-arginine biosynthesis; L-arginine from L-ornithine and carbamoyl phosphate: step 3/3. This Stenotrophomonas maltophilia (strain R551-3) protein is Argininosuccinate lyase.